The primary structure comprises 367 residues: Anhydro-N-acetylmuramic acid kinase (367 aa).

Residue 11 to 18 (GTSLDGVD) coordinates ATP.

Belongs to the anhydro-N-acetylmuramic acid kinase family.

The catalysed reaction is 1,6-anhydro-N-acetyl-beta-muramate + ATP + H2O = N-acetyl-D-muramate 6-phosphate + ADP + H(+). It functions in the pathway amino-sugar metabolism; 1,6-anhydro-N-acetylmuramate degradation. It participates in cell wall biogenesis; peptidoglycan recycling. Functionally, catalyzes the specific phosphorylation of 1,6-anhydro-N-acetylmuramic acid (anhMurNAc) with the simultaneous cleavage of the 1,6-anhydro ring, generating MurNAc-6-P. Is required for the utilization of anhMurNAc either imported from the medium or derived from its own cell wall murein, and thus plays a role in cell wall recycling. This is Anhydro-N-acetylmuramic acid kinase from Rhodopseudomonas palustris (strain HaA2).